Reading from the N-terminus, the 128-residue chain is Con-Ins F2b (128 aa).

The first 24 residues, 1–24 (MTTSSYFLLVALGLLLYVCRSSFG), serve as a signal peptide directing secretion. Intrachain disulfides connect C29–C104, C41–C107, C53–C120, and C106–C111. Residues 59-89 (LQGGTGKKRGRASLLRKRRAFLSMLKARAKR) constitute a propeptide, c peptide. 4-carboxyglutamate; partial is present on E115. S127 carries the post-translational modification Serine amide.

This sequence belongs to the insulin family. In terms of assembly, heterodimer of A and B chains; disulfide-linked. Expressed by the venom gland.

Its subcellular location is the secreted. Functionally, this venom insulin facilitates prey capture by rapidly inducing hypoglycemic shock. Intraperitoneal injection of this peptide into zebrafish lowers blood glucose with the same potency than human insulin. In vivo, when applied to water, this peptide reduces overall locomotor activity of zebrafish larvae, observed as a significant decrease in the percentage of time spent swimming and movement frequency. In Conus floridulus (Cone snail), this protein is Con-Ins F2b.